Consider the following 425-residue polypeptide: Terminal nucleotidyltransferase 5B (425 aa).

Residues 1–42 (MMPSESGAERRDRAAAQVGTAAATAVATAAPAGGGPDPEALS) form a disordered region. Low complexity predominate over residues 15-31 (AAQVGTAAATAVATAAP).

Belongs to the TENT family.

It localises to the cytoplasm. The protein resides in the nucleus. It carries out the reaction RNA(n) + ATP = RNA(n)-3'-adenine ribonucleotide + diphosphate. In terms of biological role, catalyzes the transfer of one adenosine molecule from an ATP to an mRNA poly(A) tail bearing a 3'-OH terminal group in an ATP hydrolysis-dependent manner. May be involved in maintaining the translation efficiency of at least some genes through preventing degradation of their mRNAs. Prefers RNA molecules that are adenosine-rich close to 3'-end. In addition, may inhibit cell proliferation and cell cycle progression through ubiquitination of beta-catenin/CTNNB1. In Homo sapiens (Human), this protein is Terminal nucleotidyltransferase 5B.